The sequence spans 550 residues: uncharacterized protein (550 aa).

Positions 1-13 (MAGALFEPSFAAA) are cleaved as a signal peptide. A disordered region spans residues 312–358 (DAQPDPHLSGDEPPSRPLTPETTLFEALTPDPEPDPPATHAPAELIT).

It to M.tuberculosis Rv3776.

This is an uncharacterized protein from Mycobacterium tuberculosis (strain CDC 1551 / Oshkosh).